Reading from the N-terminus, the 682-residue chain is MTTQPRKILVTCALPYANGAIHLGHMLEHIQADIWVRFQRMRGNKIHFVCADDAHGTPIMLNADKLGITPEELIAKAKADHIRDFAGFNISFDNYHSTHSEENKQLTAEIYNKLKANGFIKSKVISQLFDPEKNMFLPDRFVKGTCPKCKAEDQYGDNCEVCASTYSPMDLINPRSAVSGTTPIVKESEHFFFDLPAFEGMLKEWTRSGSLQSEIANKMQEWFESDLQQWDISRDAPYFGFEIPGAKDKFFYVWLDAPIGYMASFKNLCNREGIDFNEFWAEGSDAELYHFIGKDIVYFHSLFWPAMLEGSGYRKPTNVFAHGYVTVDGAKMSKSRGTFIQASTYLNHIDPECLRYYYAAKLNDRIEDLDFNLEDFVQRVNTDIVNKLVNLASRNAGFIAKRFEGKLADKLEDKSLFAEFTAQAEQIAAYYESREYNKTIREIMALTDKANKYIDEKAPWVIAKEEGKEAELQAVCSMGIELFRVLMSYLKPVLPKLAERAETFLQAELRWDNIHQPLLGHTLAPFKALFSRLEKKQIDAVVEETKALFAAANKAAEKTEAKPTALSAVEPIAETITIDDFAKLDMRVAKVLKCEAVPESNKLLRFELDLGDHTRQVFSGIKAAYNKPEELEGRFVIMVANLAPRKMKFGVSEGMILSAGTGGSDLFLLSADSGVTAGMQVK.

The 'HIGH' region motif lies at 15–25; the sequence is PYANGAIHLGH. Residues Cys-146, Cys-149, Cys-159, and Cys-162 each contribute to the Zn(2+) site. Residues 331–335 carry the 'KMSKS' region motif; it reads KMSKS. Lys-334 provides a ligand contact to ATP. In terms of domain architecture, tRNA-binding spans 580 to 682; that stretch reads DFAKLDMRVA…SGVTAGMQVK (103 aa).

The protein belongs to the class-I aminoacyl-tRNA synthetase family. MetG type 1 subfamily. In terms of assembly, homodimer. Zn(2+) is required as a cofactor.

The protein resides in the cytoplasm. It catalyses the reaction tRNA(Met) + L-methionine + ATP = L-methionyl-tRNA(Met) + AMP + diphosphate. In terms of biological role, is required not only for elongation of protein synthesis but also for the initiation of all mRNA translation through initiator tRNA(fMet) aminoacylation. The polypeptide is Methionine--tRNA ligase (Haemophilus influenzae (strain ATCC 51907 / DSM 11121 / KW20 / Rd)).